The sequence spans 156 residues: AP-1 complex subunit sigma-1 (156 aa).

This sequence belongs to the adaptor complexes small subunit family. In terms of assembly, adaptor protein complex 1 (AP-1) is a heterotetramer composed of two large adaptins (gamma-type subunit and beta-type subunit), a medium adaptin (mu-type subunit) and a small adaptin (sigma-type subunit).

The protein localises to the golgi apparatus. The protein resides in the trans-Golgi network. It localises to the cytoplasmic vesicle. Its subcellular location is the clathrin-coated vesicle membrane. In terms of biological role, subunit of clathrin-associated adaptor protein complex 1 that plays a role in protein sorting in the trans-Golgi network (TGN) and endosomes. The AP complexes mediate the recruitment of clathrin to membranes and the recognition of sorting signals within the cytosolic tails of transmembrane cargo molecules. Also involved in early steps of phagocytosis and macropinocytosis. The protein is AP-1 complex subunit sigma-1 (ap1s1) of Dictyostelium discoideum (Social amoeba).